Reading from the N-terminus, the 382-residue chain is Gap junction alpha-1 protein (382 aa).

Topologically, residues 2–23 are cytoplasmic; the sequence is GDWSALGKLLDKVQAYSTAGGK. Position 5 is a phosphoserine (Ser-5). The chain crosses the membrane as a helical span at residues 24 to 44; it reads VWLSVLFIFRILLLGTAVESA. The Extracellular portion of the chain corresponds to 45–76; sequence WGDEQSAFRCNTQQPGCENVCYDKSFPISHVR. 2 cysteine pairs are disulfide-bonded: Cys-54-Cys-192 and Cys-187-Cys-198. Residues 77–97 form a helical membrane-spanning segment; the sequence is FWVLQIIFVSVPTLLYLAHVF. The Cytoplasmic segment spans residues 98–155; sequence YVMRKEEKLNKKEEELKVAQTDGVNVEMHLKQIEIKKFKYGIEEHGKVKMRGGLLRTY. A Glycyl lysine isopeptide (Lys-Gly) (interchain with G-Cter in SUMO) cross-link involves residue Lys-144. Residues 156–176 form a helical membrane-spanning segment; the sequence is IISILFKSVFEVAFLLIQWYI. Residues 177–207 are Extracellular-facing; sequence YGFSLSAVYTCKRDPCPHQVDCFLSRPTEKT. Residues 208–228 form a helical membrane-spanning segment; sequence IFIIFMLVVSLVSLALNIIEL. Over 229 to 382 the chain is Cytoplasmic; sequence FYVFFKGVKD…SRPRPDDLEI (154 aa). Residue Lys-237 forms a Glycyl lysine isopeptide (Lys-Gly) (interchain with G-Cter in SUMO) linkage. The interval 244–382 is interaction with NOV; that stretch reads SDPYHATTGP…SRPRPDDLEI (139 aa). The residue at position 247 (Tyr-247) is a Phosphotyrosine. Residues Ser-255, Ser-257, and Ser-262 each carry the phosphoserine modification. Residues 264-382 are interaction with UBQLN4; it reads KYAYFNGCSS…SRPRPDDLEI (119 aa). An S-nitrosocysteine modification is found at Cys-271. Position 275 is a phosphothreonine (Thr-275). Phosphoserine occurs at positions 306, 314, and 325. Over residues 317-332 the composition is skewed to polar residues; sequence QNRMGQAGSTISNSHA. A disordered region spans residues 317–382; that stretch reads QNRMGQAGST…SRPRPDDLEI (66 aa). A Phosphothreonine modification is found at Thr-326. Residues Ser-328, Ser-330, Ser-341, and Ser-365 each carry the phosphoserine modification. A compositionally biased stretch (low complexity) spans 362 to 374; the sequence is RPSSRASSRASSR. Ser-368 is modified (phosphoserine; by PKC/PRKCG and PKC/PRKCD). Phosphoserine is present on residues Ser-369 and Ser-373.

Belongs to the connexin family. Alpha-type (group II) subfamily. In terms of assembly, a connexon is composed of a hexamer of connexins. Interacts with CSNK1D. Interacts with RIC1/CIP150. Interacts (via C-terminus) with TJP1. Interacts (via C-terminus) with SRC (via SH3 domain). Interacts (not ubiquitinated) with UBQLN4 (via UBA domain). Interacts with CNST. Interacts with SGSM3. Interacts with NOV. Interacts with TMEM65. Interacts with ANK3/ANKG and PKP2. Post-translationally, phosphorylation at Ser-325, Ser-328 and Ser-330 by CK1 modulates gap junction assembly. Phosphorylated at Ser-368 by PRKCG; phosphorylation induces disassembly of gap junction plaques and inhibition of gap junction activity. Phosphorylation at Ser-368 by PRKCD triggers its internalization into small vesicles leading to proteasome-mediated degradation. In terms of processing, sumoylated with SUMO1, SUMO2 and SUMO3, which may regulate the level of functional Cx43 gap junctions at the plasma membrane. May be desumoylated by SENP1 or SENP2. Acetylated in the developing cortex; leading to delocalization from the cell membrane. Post-translationally, S-nitrosylation at Cys-271 is enriched at the muscle endothelial gap junction in arteries, it augments channel permeability and may regulate of smooth muscle cell to endothelial cell communication. Expressed in heart, non-sensory epithelial cells, and in fibrocytes of the spiral ligament and the spiral limbus. Expressed in bladder smooth muscle cells (at protein level). Expressed in astrocytes (at protein level).

It localises to the cell membrane. The protein localises to the cell junction. It is found in the gap junction. Its subcellular location is the endoplasmic reticulum. Gap junction protein that acts as a regulator of bladder capacity. A gap junction consists of a cluster of closely packed pairs of transmembrane channels, the connexons, through which materials of low MW diffuse from one cell to a neighboring cell. Negative regulator of bladder functional capacity: acts by enhancing intercellular electrical and chemical transmission, thus sensitizing bladder muscles to cholinergic neural stimuli and causing them to contract. May play a role in cell growth inhibition through the regulation of NOV expression and localization. Plays an essential role in gap junction communication in the ventricles. Functionally, connexin 43 is possibly the ATP-induced pore of mouse macrophages. The protein is Gap junction alpha-1 protein (Gja1) of Mus musculus (Mouse).